Here is a 352-residue protein sequence, read N- to C-terminus: Peptide chain release factor 1 (352 aa).

Q233 carries the N5-methylglutamine modification. Residues 288-309 (NAKDRKEQVGSGDRSERIRTYN) form a disordered region. The span at 289 to 306 (AKDRKEQVGSGDRSERIR) shows a compositional bias: basic and acidic residues.

It belongs to the prokaryotic/mitochondrial release factor family. In terms of processing, methylated by PrmC. Methylation increases the termination efficiency of RF1.

The protein localises to the cytoplasm. Its function is as follows. Peptide chain release factor 1 directs the termination of translation in response to the peptide chain termination codons UAG and UAA. This is Peptide chain release factor 1 from Helicobacter pylori (strain Shi470).